The chain runs to 427 residues: Dihydroorotase (427 aa).

Zn(2+) is bound by residues His60 and His62. Substrate contacts are provided by residues 62-64 (HLR) and Asn94. The Zn(2+) site is built by Asp152, His179, and His232. Residue Asn278 coordinates substrate. Asp305 is a Zn(2+) binding site. Asp305 is an active-site residue. Residues His309 and 323–324 (FG) contribute to the substrate site.

This sequence belongs to the metallo-dependent hydrolases superfamily. DHOase family. Class I DHOase subfamily. It depends on Zn(2+) as a cofactor.

The catalysed reaction is (S)-dihydroorotate + H2O = N-carbamoyl-L-aspartate + H(+). Its pathway is pyrimidine metabolism; UMP biosynthesis via de novo pathway; (S)-dihydroorotate from bicarbonate: step 3/3. Catalyzes the reversible cyclization of carbamoyl aspartate to dihydroorotate. In Bacillus caldolyticus, this protein is Dihydroorotase.